The sequence spans 205 residues: Large ribosomal subunit protein uL4 (205 aa).

The tract at residues 43–95 (RSGNRAQKDRAEVKHSTKKPWRQKGTGRARAGMTSSPLWRGGGRAFPNSPEEN) is disordered. The segment covering 48–57 (AQKDRAEVKH) has biased composition (basic and acidic residues). Residues 58–69 (STKKPWRQKGTG) show a composition bias toward basic residues.

Belongs to the universal ribosomal protein uL4 family. Part of the 50S ribosomal subunit.

Functionally, one of the primary rRNA binding proteins, this protein initially binds near the 5'-end of the 23S rRNA. It is important during the early stages of 50S assembly. It makes multiple contacts with different domains of the 23S rRNA in the assembled 50S subunit and ribosome. Its function is as follows. Forms part of the polypeptide exit tunnel. This is Large ribosomal subunit protein uL4 from Bordetella bronchiseptica (strain ATCC BAA-588 / NCTC 13252 / RB50) (Alcaligenes bronchisepticus).